A 67-amino-acid polypeptide reads, in one-letter code: MPQLDTSTWFITITSMIMTLFILFQLKISNYSYPASPESIELKTQKHSTPWEMKWTKIYLPLLLPPR.

Residues 8-24 traverse the membrane as a helical segment; that stretch reads TWFITITSMIMTLFILF. N6-acetyllysine; alternate is present on Lys54. Lys54 bears the N6-succinyllysine; alternate mark. An N6-acetyllysine modification is found at Lys57.

It belongs to the ATPase protein 8 family. As to quaternary structure, component of the ATP synthase complex composed at least of ATP5F1A/subunit alpha, ATP5F1B/subunit beta, ATP5MC1/subunit c (homooctomer), MT-ATP6/subunit a, MT-ATP8/subunit 8, ATP5ME/subunit e, ATP5MF/subunit f, ATP5MG/subunit g, ATP5MK/subunit k, ATP5MJ/subunit j, ATP5F1C/subunit gamma, ATP5F1D/subunit delta, ATP5F1E/subunit epsilon, ATP5PF/subunit F6, ATP5PB/subunit b, ATP5PD/subunit d, ATP5PO/subunit OSCP. ATP synthase complex consists of a soluble F(1) head domain (subunits alpha(3) and beta(3)) - the catalytic core - and a membrane F(0) domain - the membrane proton channel (subunits c, a, 8, e, f, g, k and j). These two domains are linked by a central stalk (subunits gamma, delta, and epsilon) rotating inside the F1 region and a stationary peripheral stalk (subunits F6, b, d, and OSCP). Interacts with PRICKLE3.

It localises to the mitochondrion membrane. Subunit 8, of the mitochondrial membrane ATP synthase complex (F(1)F(0) ATP synthase or Complex V) that produces ATP from ADP in the presence of a proton gradient across the membrane which is generated by electron transport complexes of the respiratory chain. ATP synthase complex consist of a soluble F(1) head domain - the catalytic core - and a membrane F(1) domain - the membrane proton channel. These two domains are linked by a central stalk rotating inside the F(1) region and a stationary peripheral stalk. During catalysis, ATP synthesis in the catalytic domain of F(1) is coupled via a rotary mechanism of the central stalk subunits to proton translocation. In vivo, can only synthesize ATP although its ATP hydrolase activity can be activated artificially in vitro. Part of the complex F(0) domain. The protein is ATP synthase F(0) complex subunit 8 of Sus scrofa (Pig).